Reading from the N-terminus, the 48-residue chain is Large ribosomal subunit protein bL32 (48 aa).

Residues 1 to 20 show a composition bias toward basic residues; it reads MAVPKRRVSKTRAAKRRTHY. The segment at 1–48 is disordered; the sequence is MAVPKRRVSKTRAAKRRTHYKVSLPMPIKDKDGSYKMPHRANPTTKEY.

The protein belongs to the bacterial ribosomal protein bL32 family.

This chain is Large ribosomal subunit protein bL32 (rpmF), found in Campylobacter jejuni subsp. jejuni serotype O:2 (strain ATCC 700819 / NCTC 11168).